The following is a 404-amino-acid chain: MKLPIYLDYSATTPVDPRVAEKMMQFLTLDGTFGNPASRSHRFGWQAEEAVDIARNQIAELVGADPREIVFTSGATEADNLAIKGVANFYQKKGKHIITSKTEHKAVLDTCRQLEREGFEVTYLAPQRNGIIDLAELEAAMREDTILVSIMHVNNEIGVVQDIETIGEMCRSRGIVFHVDATQSVGKLPIDLNQLKVDLMSFSGHKIYGPKGIGALYVRRKPRIRLEAQMHGGGHERGMRSGTLPVHQIVGMGEAYRIAKEEMTAEMDRLRTLRDRLWNGINDIEEVYLNGDIEQGAPNILNVSFNYVEGESLIMALKDLAVSSGSACTSASLEPSYVLRALGMNDELAHSSIRFSLGRFTTEEEIDYTIELVRKSIGRLRDLSPLWEMFKQGVDISSIEWAHH.

Pyridoxal 5'-phosphate-binding positions include 75-76 (AT), asparagine 155, glutamine 183, and 203-205 (SGH). Lysine 206 carries the N6-(pyridoxal phosphate)lysine modification. Residue threonine 243 coordinates pyridoxal 5'-phosphate. Catalysis depends on cysteine 328, which acts as the Cysteine persulfide intermediate. Cysteine 328 contacts [2Fe-2S] cluster.

This sequence belongs to the class-V pyridoxal-phosphate-dependent aminotransferase family. NifS/IscS subfamily. Homodimer. Forms a heterotetramer with IscU, interacts with other sulfur acceptors. The cofactor is pyridoxal 5'-phosphate.

The protein resides in the cytoplasm. It carries out the reaction (sulfur carrier)-H + L-cysteine = (sulfur carrier)-SH + L-alanine. Its pathway is cofactor biosynthesis; iron-sulfur cluster biosynthesis. In terms of biological role, master enzyme that delivers sulfur to a number of partners involved in Fe-S cluster assembly, tRNA modification or cofactor biosynthesis. Catalyzes the removal of elemental sulfur atoms from cysteine to produce alanine. Functions as a sulfur delivery protein for Fe-S cluster synthesis onto IscU, an Fe-S scaffold assembly protein, as well as other S acceptor proteins. This chain is Cysteine desulfurase IscS, found in Pectobacterium carotovorum subsp. carotovorum (strain PC1).